The primary structure comprises 657 residues: Endoplasmic reticulum chaperone BiP homolog (657 aa).

The first 17 residues, methionine 1–cysteine 17, serve as a signal peptide directing secretion. Residues glycine 38–tyrosine 41, lysine 99, glycine 229–threonine 231, glutamate 295–serine 302, and glycine 366–arginine 369 contribute to the ATP site. A nucleotide-binding (NBD) region spans residues lysine 128–lysine 282. The segment at valine 402–threonine 502 is substrate-binding (SBD). The tract at residues leucine 607–leucine 657 is disordered. The span at glutamate 616–glutamate 626 shows a compositional bias: basic and acidic residues. Residues alanine 646–leucine 657 are compositionally biased toward acidic residues. Residues histidine 654–leucine 657 carry the Prevents secretion from ER motif.

It belongs to the heat shock protein 70 family.

The protein resides in the endoplasmic reticulum lumen. The enzyme catalyses ATP + H2O = ADP + phosphate + H(+). The chaperone activity is regulated by ATP-induced allosteric coupling of the nucleotide-binding (NBD) and substrate-binding (SBD) domains. In the ADP-bound and nucleotide-free (apo) states, the two domains have little interaction. In contrast, in the ATP-bound state the two domains are tightly coupled, which results in drastically accelerated kinetics in both binding and release of polypeptide substrates. J domain-containing co-chaperones stimulate the ATPase activity and are required for efficient substrate recognition. In terms of biological role, endoplasmic reticulum chaperone that plays a key role in protein folding and quality control in the endoplasmic reticulum lumen. Required for ER dynamics during the first embryonic cell divisions. Specifically, controls ER transition into sheet-like structures at the onset of mitosis, possibly by regulating homotypic membrane fusion. The protein is Endoplasmic reticulum chaperone BiP homolog (hsp-4) of Caenorhabditis elegans.